A 496-amino-acid polypeptide reads, in one-letter code: Cytochrome P450 71B14 (496 aa).

The helical transmembrane segment at 1–21 (MIWWFIVGASFFFAFILIAKD) threads the bilayer. C436 is a binding site for heme.

It belongs to the cytochrome P450 family. Heme is required as a cofactor.

Its subcellular location is the membrane. In Arabidopsis thaliana (Mouse-ear cress), this protein is Cytochrome P450 71B14 (CYP71B14).